The chain runs to 128 residues: uncharacterized protein (128 aa).

Residues 24–43 (KRTQNNTEQASRAINSPLQS) are disordered. The segment covering 26-43 (TQNNTEQASRAINSPLQS) has biased composition (polar residues).

This is an uncharacterized protein from Homo sapiens (Human).